A 314-amino-acid polypeptide reads, in one-letter code: Basic endochitinase (314 aa).

The signal sequence occupies residues 1–20; it reads MGLWALVAFCLLSLILVGSA. Residues 21-61 enclose the Chitin-binding type-1 domain; sequence EQCGGQAGGRVCPGGACCSKFGWCGNTADYCGSGCQSQCSS. Disulfide bonds link Cys23–Cys38, Cys32–Cys44, Cys37–Cys51, Cys55–Cys59, Cys86–Cys148, Cys160–Cys168, and Cys267–Cys299. The active-site Proton donor is the Glu130.

It belongs to the glycosyl hydrolase 19 family. Chitinase class I subfamily.

The catalysed reaction is Random endo-hydrolysis of N-acetyl-beta-D-glucosaminide (1-&gt;4)-beta-linkages in chitin and chitodextrins.. Functionally, defense against chitin-containing fungal pathogens. In Vitis vinifera (Grape), this protein is Basic endochitinase (CHIT1B).